Reading from the N-terminus, the 330-residue chain is MKTAYIAKQRQISFVKSHFSRQLEERLGLIEVQAPILSRVGDGTQDNLSGCEKAVQVKVKALPDAQFEVVHSLAKWKRQTLGQHDFSAGEGLYTHMKALRPDEDRLSPLHSVYVDQWDWERVMGDGERQFSTLKSTVEAIWAGIKATEAEVHKQFGLAPFLPDQIHFVHSQELLARFPDLDAKGRERAIAKELGAVFLVGIGGKLSDGHRHDVRAPDYDDWSSASELGYAGLNGDILVWNPVLEDAFELSSMGIRVDADTLMRQLALTGDEDRLQLEWHQALLRGEMPQTIGGGIGQSRLTMLLLQLPHIGQVQCGVWPAQVRESIPAIL.

Belongs to the class-II aminoacyl-tRNA synthetase family. AsnA subfamily.

Its subcellular location is the cytoplasm. It catalyses the reaction L-aspartate + NH4(+) + ATP = L-asparagine + AMP + diphosphate + H(+). It participates in amino-acid biosynthesis; L-asparagine biosynthesis; L-asparagine from L-aspartate (ammonia route): step 1/1. In Salmonella paratyphi A (strain ATCC 9150 / SARB42), this protein is Aspartate--ammonia ligase.